A 169-amino-acid chain; its full sequence is Disulfide bond formation protein B 1 (169 aa).

The Cytoplasmic portion of the chain corresponds to 1–14 (MSDNTLYLRREKRF). A helical membrane pass occupies residues 15–31 (LVLLGIICLALIGGALY). Over 32 to 49 (MQVVLDEAPCPLCILQRY) the chain is Periplasmic. A disulfide bridge connects residues Cys41 and Cys44. Residues 50 to 65 (ALLFIAIFAFIGAAMP) traverse the membrane as a helical segment. Residues 66–72 (GRRSVTA) are Cytoplasmic-facing. The chain crosses the membrane as a helical span at residues 73–89 (FETLVTLSALGGIAAAG). Residues 90-144 (RHVWILAHPSDSCGIDVLQPIVDGLPLATLFPTGFQVSGFCTTPYPPVLGLSLAQ) are Periplasmic-facing. Residues Cys102 and Cys130 are joined by a disulfide bond. The chain crosses the membrane as a helical span at residues 145–163 (WALTAFVLTAVLVPACIIR). The Cytoplasmic portion of the chain corresponds to 164–169 (NRRKPY).

The protein belongs to the DsbB family.

Its subcellular location is the cell inner membrane. Required for disulfide bond formation in some periplasmic proteins. Acts by oxidizing the DsbA protein. The chain is Disulfide bond formation protein B 1 from Pseudomonas syringae pv. syringae (strain B728a).